We begin with the raw amino-acid sequence, 374 residues long: MKETRDPSQIRVVVGMSGGVDSSVAAYLLKQQGYEVIGIFMKNWDDTDENGVCTATEDYDDVIKVCNQIGIPYYAVNFEKQYWDKVFTYFLEEYKAGRTPNPDVMCNKEIKFKAFLEHAMSLGADYLATGHYARIDRSGDGEVKMLRGVDNNKDQTYFLNQLSQEQLAHVMFPIGDIEKKEVRKIAEEAGLATAKKKDSTGICFIGERNFKEFLSQFLPAQPGNMETMDGVVMGKHDGLMYYTLGQRHGLGIGGDGEPWFVLGKDLERNVLLVGQGFDNEHLYSTSLSAVKMNYTSTKKLPGKFSCTAKFRYRQTDTPVEVELLADGRTHITFAEPVRAITPGQAVVLYDGEECIGGGTIDEVFKSNEKLTYVG.

Residues 15-22 and M41 contribute to the ATP site; that span reads GMSGGVDS. The segment at 101 to 103 is interaction with target base in tRNA; that stretch reads NPD. The active-site Nucleophile is the C106. A disulfide bridge connects residues C106 and C203. Residue G130 coordinates ATP. The tract at residues 153–155 is interaction with tRNA; it reads KDQ. C203 (cysteine persulfide intermediate) is an active-site residue. Positions 311–312 are interaction with tRNA; the sequence is RY.

This sequence belongs to the MnmA/TRMU family.

It is found in the cytoplasm. It catalyses the reaction S-sulfanyl-L-cysteinyl-[protein] + uridine(34) in tRNA + AH2 + ATP = 2-thiouridine(34) in tRNA + L-cysteinyl-[protein] + A + AMP + diphosphate + H(+). Catalyzes the 2-thiolation of uridine at the wobble position (U34) of tRNA, leading to the formation of s(2)U34. The chain is tRNA-specific 2-thiouridylase MnmA from Lysinibacillus sphaericus (strain C3-41).